The following is a 117-amino-acid chain: Ig heavy chain V region MOPC 173 (117 aa).

Residues 1–116 (EVKLLESGGP…WGQGTSVTVS (116 aa)) enclose the Ig-like domain. A disulfide bond links Cys22 and Cys96.

This chain is Ig heavy chain V region MOPC 173, found in Mus musculus (Mouse).